A 61-amino-acid chain; its full sequence is Beta-insect depressant toxin BmKIT2 (61 aa).

The 61-residue stretch at 1–61 folds into the LCN-type CS-alpha/beta domain; sequence DGYIKGKSGC…TWKSESNTCG (61 aa). 4 disulfides stabilise this stretch: Cys-10-Cys-60, Cys-14-Cys-35, Cys-21-Cys-42, and Cys-25-Cys-44. Gly-61 is subject to Glycine amide.

Belongs to the long (4 C-C) scorpion toxin superfamily. Sodium channel inhibitor family. Beta subfamily. In terms of tissue distribution, expressed by the venom gland.

The protein resides in the secreted. Its function is as follows. On insects, this depressant beta-toxins cause a transient contraction paralysis followed by a slow flaccid paralysis. They bind voltage-independently at site-4 of sodium channels (Nav) and shift the voltage of activation toward more negative potentials thereby affecting sodium channel activation and promoting spontaneous and repetitive firing. This toxin is active against insects and mammals. It is capable of binding to not only cockroach neuronal membranes, but also rat cerebrocortical and hippocampal synaptosomes. This toxin also has potent peripheral and central suppressive effects on rat nociceptive spontaneous responses, thermal hyperalgesia and spinal c-Fos expression induced by formalin and carrageenan, which may be derived from its modulation on the activity of sodium channels of the neurons. Administration of BmKIT2 into rat brain can also suppress the epileptic seizures significantly. In Olivierus martensii (Manchurian scorpion), this protein is Beta-insect depressant toxin BmKIT2.